The following is a 392-amino-acid chain: Integrin-linked kinase-associated serine/threonine phosphatase 2C (392 aa).

Residue methionine 1 is modified to N-acetylmethionine. The segment at 1–90 (MDLFGDLPEP…TSEEEKNGSE (90 aa)) is disordered. Serine 13 is modified (phosphoserine). A compositionally biased stretch (polar residues) spans 56 to 70 (SGDSGSLATSISQMV). Positions 72–90 (TEGKGAKRKTSEEEKNGSE) are enriched in basic and acidic residues. Residues 108–390 (KGYVAERKGE…DNVTVMVVRI (283 aa)) form the PPM-type phosphatase domain. Mn(2+) contacts are provided by aspartate 152 and glycine 153. An N6-acetyllysine modification is found at lysine 210. Mn(2+)-binding residues include aspartate 326 and aspartate 381.

It belongs to the PP2C family. In terms of assembly, interacts with ILK. Specific association with ILK is independent of the catalytic activity of either partner. Mg(2+) is required as a cofactor. Requires Mn(2+) as cofactor. Widely expressed. Highest levels expressed in striated muscle. Much lower levels evident in various smooth muscle tissues.

The protein resides in the cytoplasm. It carries out the reaction O-phospho-L-seryl-[protein] + H2O = L-seryl-[protein] + phosphate. The enzyme catalyses O-phospho-L-threonyl-[protein] + H2O = L-threonyl-[protein] + phosphate. With respect to regulation, inhibited rather than stimulated by magnesium. Its function is as follows. Protein phosphatase that may play a role in regulation of cell cycle progression via dephosphorylation of its substrates whose appropriate phosphorylation states might be crucial for cell proliferation. Selectively associates with integrin linked kinase (ILK), to modulate cell adhesion and growth factor signaling. Inhibits the ILK-GSK3B signaling axis and may play an important role in inhibiting oncogenic transformation. The chain is Integrin-linked kinase-associated serine/threonine phosphatase 2C (ILKAP) from Homo sapiens (Human).